The primary structure comprises 354 residues: Guanine nucleotide-binding protein G(i) subunit alpha-1 (354 aa).

Gly2 is lipidated: N-myristoyl glycine. The S-palmitoyl cysteine moiety is linked to residue Cys3. Residues 32–354 (REVKLLLLGA…KNNLKDCGLF (323 aa)) enclose the G-alpha domain. Residues 35-48 (KLLLLGAGESGKST) form a G1 motif region. Residues 43–48 (ESGKST), 150–151 (DS), and 175–178 (LRTR) contribute to the GTP site. Ser47 provides a ligand contact to Mg(2+). The segment at 173–181 (DVLRTRVKT) is G2 motif. Thr181 serves as a coordination point for Mg(2+). The tract at residues 196-205 (FKMFDVGGQR) is G3 motif. Residues 200–204 (DVGGQ), 269–272 (NKKD), and Ala326 each bind GTP. Residues 265–272 (ILFLNKKD) form a G4 motif region. The G5 motif stretch occupies residues 324-329 (TCATDT).

Belongs to the G-alpha family. G(i/o/t/z) subfamily. As to quaternary structure, heterotrimeric G proteins are composed of 3 units; alpha, beta and gamma. The alpha chain contains the guanine nucleotide binding site. Part of a spindle orientation complex at least composed of GNAI1, GPSM2 and NUMA1. Identified in complex with the beta subunit GNB1 and the gamma subunit GNG1. Identified in complex with the beta subunit GNB1 and the gamma subunit GNG2. Component of the TAS2R14-GNAI1 complex, consisting of TAS2R14, GNAI1, GNB1 and GNG2; within the complex interacts with TAS2R14; this complex plays a role in the perception of bitterness. GTP binding causes dissociation of the heterotrimer, liberating the individual subunits so that they can interact with downstream effector proteins. Interacts (GDP-bound form) with GPSM1; this inhibits guanine nucleotide exchange and GTP binding. Interacts (GDP-bound form) with GPSM2 (via GoLoco domains); this inhibits guanine nucleotide exchange. Interacts with RGS10; this strongly enhances GTP hydrolysis. Interacts with RGS1 and RGS16; this strongly enhances GTPase activity. Interacts with RGS4. Interacts with RGS12. Interacts (via active GTP- or inactive GDP-bound forms) with RGS14 (via RGS and GoLoco domains). Interacts with RGS3, RGS6, RGS7, RGS8, RGS17, RGS18 and RGS20 (in vitro). Interacts (GDP-bound form) with RIC8A (via C-terminus); promoting GNAI1 folding and association with the plasma membrane. Interacts (inactive GDP-bound form) with NUCB1 (via GBA motif); the interaction leads to activation of GNAI1. Interacts (inactive GDP-bound form) with CCDC88C/DAPLE (via GBA motif); the interaction leads to activation of GNAI1. Interacts (inactive GDP-bound form) with CCDC8A/GIV (via GBA motif). In terms of processing, myristoylation at Gly-2 is required for membrane anchoring before palmitoylation. Post-translationally, palmitoylation at Cys-3 varies with membrane lipid composition. In terms of tissue distribution, mainly expressed in the brain, lung and kidney.

Its subcellular location is the nucleus. It is found in the cytoplasm. The protein localises to the cell membrane. The protein resides in the cytoskeleton. It localises to the microtubule organizing center. Its subcellular location is the centrosome. It is found in the cell cortex. The protein localises to the membrane. It carries out the reaction GTP + H2O = GDP + phosphate + H(+). In terms of biological role, guanine nucleotide-binding proteins (G proteins) function as transducers downstream of G protein-coupled receptors (GPCRs) in numerous signaling cascades. The alpha chain contains the guanine nucleotide binding site and alternates between an active, GTP-bound state and an inactive, GDP-bound state. Signaling by an activated GPCR promotes GDP release and GTP binding. The alpha subunit has a low GTPase activity that converts bound GTP to GDP, thereby terminating the signal. Both GDP release and GTP hydrolysis are modulated by numerous regulatory proteins. Signaling is mediated via effector proteins, such as adenylate cyclase. Inhibits adenylate cyclase activity of ADCY1, ADCY5 and ADCY6, leading to decreased intracellular cAMP levels. The inactive GDP-bound form prevents the association of RGS14 with centrosomes and is required for the translocation of RGS14 from the cytoplasm to the plasma membrane. Required for normal cytokinesis during mitosis. Required for cortical dynein-dynactin complex recruitment during metaphase. The protein is Guanine nucleotide-binding protein G(i) subunit alpha-1 (GNAI1) of Cavia porcellus (Guinea pig).